A 517-amino-acid polypeptide reads, in one-letter code: MTKNIHDQRILILDFGSQYTQLVARRVREIGVYCELWSWDVEEADIREFNPDGIILSGGPESVTEDNSPRAPQYVFDSGVPVLGVCYGMQTMAEQLGGKVAGSTEREFGYAQVKVSGESALFKDLELTQDVWMSHGDKVVEIPADFVKVGETDTCPYAAMANEEKKYYGVQFHPEVTHTKGGLQMLENFVLGVCGCERLWTSESIIEDAVARIKEQVGDDEVILGLSGGVDSSVVAMLVHRAIGDKLTCVFVDNGLLRLNEGQQVMDMFGDQFGLNIIKVDAEDRFLKALEGKSDPEEKRKTIGHVFVDVFDEESKKLKNAKWLAQGTIYPDVIESAASKTGKAHVIKSHHNVGGLPDDMEMGLVEPLRELFKDEVRKIGLELGLPYNMLYRHPFPGPGLGVRVLGEIKKEYCDLLRRADAIFIEELHAADLYNKVSQAFTVFLPVRSVGVMGDGRKYDWVVSLRAVETIDFMTAHWAHLPYDFLGKVSNRIINEVDGISRVVYDISGKPPATIEWE.

Positions 9–199 (RILILDFGSQ…VLGVCGCERL (191 aa)) constitute a Glutamine amidotransferase type-1 domain. Cys-86 functions as the Nucleophile in the catalytic mechanism. Catalysis depends on residues His-173 and Glu-175. The 193-residue stretch at 200-392 (WTSESIIEDA…LGLPYNMLYR (193 aa)) folds into the GMPS ATP-PPase domain. 227-233 (SGGVDSS) contributes to the ATP binding site.

In terms of assembly, homodimer.

It carries out the reaction XMP + L-glutamine + ATP + H2O = GMP + L-glutamate + AMP + diphosphate + 2 H(+). It functions in the pathway purine metabolism; GMP biosynthesis; GMP from XMP (L-Gln route): step 1/1. In terms of biological role, catalyzes the synthesis of GMP from XMP. The sequence is that of GMP synthase [glutamine-hydrolyzing] from Vibrio campbellii (strain ATCC BAA-1116).